A 473-amino-acid chain; its full sequence is Photosystem II CP43 reaction center protein (473 aa).

Residues 1-14 (MKTLYSLRRFYHVE) constitute a propeptide that is removed on maturation. Thr15 carries the N-acetylthreonine modification. A Phosphothreonine modification is found at Thr15. 5 consecutive transmembrane segments (helical) span residues 69 to 93 (LFEVAHFVPEKPMYEQGLILLPHLA), 134 to 155 (LLGPETLEESFPFFGYVWKDRN), 178 to 200 (KALYFGGVYDTWAPGGGDVRKIT), 255 to 275 (KPFAWARRALVWSGEAYLSYS), and 291 to 312 (WFNNTAYPSEFYGPTGPEASQA). Residue Glu367 coordinates [CaMn4O5] cluster. Residues 447–471 (RARAAAAGFEKGIDRDFEPVLSMTP) traverse the membrane as a helical segment.

This sequence belongs to the PsbB/PsbC family. PsbC subfamily. PSII is composed of 1 copy each of membrane proteins PsbA, PsbB, PsbC, PsbD, PsbE, PsbF, PsbH, PsbI, PsbJ, PsbK, PsbL, PsbM, PsbT, PsbX, PsbY, PsbZ, Psb30/Ycf12, at least 3 peripheral proteins of the oxygen-evolving complex and a large number of cofactors. It forms dimeric complexes. Requires Binds multiple chlorophylls and provides some of the ligands for the Ca-4Mn-5O cluster of the oxygen-evolving complex. It may also provide a ligand for a Cl- that is required for oxygen evolution. PSII binds additional chlorophylls, carotenoids and specific lipids. as cofactor.

It is found in the plastid. The protein resides in the chloroplast thylakoid membrane. One of the components of the core complex of photosystem II (PSII). It binds chlorophyll and helps catalyze the primary light-induced photochemical processes of PSII. PSII is a light-driven water:plastoquinone oxidoreductase, using light energy to abstract electrons from H(2)O, generating O(2) and a proton gradient subsequently used for ATP formation. This Capsella bursa-pastoris (Shepherd's purse) protein is Photosystem II CP43 reaction center protein.